A 308-amino-acid polypeptide reads, in one-letter code: Aspartate carbamoyltransferase catalytic subunit (308 aa).

Residues R55 and T56 each coordinate carbamoyl phosphate. L-aspartate is bound at residue K85. Carbamoyl phosphate is bound by residues R106, H135, and Q138. Positions 168 and 229 each coordinate L-aspartate. Carbamoyl phosphate contacts are provided by L267 and P268.

Belongs to the aspartate/ornithine carbamoyltransferase superfamily. ATCase family. In terms of assembly, heterododecamer (2C3:3R2) of six catalytic PyrB chains organized as two trimers (C3), and six regulatory PyrI chains organized as three dimers (R2).

The catalysed reaction is carbamoyl phosphate + L-aspartate = N-carbamoyl-L-aspartate + phosphate + H(+). The protein operates within pyrimidine metabolism; UMP biosynthesis via de novo pathway; (S)-dihydroorotate from bicarbonate: step 2/3. Catalyzes the condensation of carbamoyl phosphate and aspartate to form carbamoyl aspartate and inorganic phosphate, the committed step in the de novo pyrimidine nucleotide biosynthesis pathway. The chain is Aspartate carbamoyltransferase catalytic subunit from Laribacter hongkongensis (strain HLHK9).